The following is a 275-amino-acid chain: Vitamin B12-binding protein (275 aa).

A signal peptide spans 1-19 (MMNKICLYLPLFFSSLTMA). The 248-residue stretch at 25–272 (RVISLAPHAT…EVCEHFESVK (248 aa)) folds into the Fe/B12 periplasmic-binding domain. Cysteines 185 and 265 form a disulfide.

The protein belongs to the BtuF family. The complex is composed of two ATP-binding proteins (BtuD), two transmembrane proteins (BtuC) and a solute-binding protein (BtuF).

The protein localises to the periplasm. Functionally, part of the ABC transporter complex BtuCDF involved in vitamin B12 import. Binds vitamin B12 and delivers it to the periplasmic surface of BtuC. This chain is Vitamin B12-binding protein, found in Vibrio parahaemolyticus serotype O3:K6 (strain RIMD 2210633).